The chain runs to 234 residues: Thioredoxin-dependent peroxide reductase, mitochondrial (234 aa).

A mitochondrion-targeting transit peptide spans 1–30 (MSFVARSLIRNVPLMGKAILSQQKQIAARL). The 159-residue stretch at 40 to 198 (VRVQQPAPDF…VLRLIKAFQF (159 aa)) folds into the Thioredoxin domain. The active-site Cysteine sulfenic acid (-SOH) intermediate is Cys85.

Belongs to the peroxiredoxin family. AhpC/Prx1 subfamily. Homodimer; disulfide-linked, upon oxidation. 6 homodimers assemble to form a ring-like dodecamer. Also exists as a monomer, however the monomeric form is present at a much lower level than the homodimeric form. As to expression, expressed in thoracic flight muscles (at protein level). Detected in the head and body (at protein level).

The protein localises to the mitochondrion. It carries out the reaction a hydroperoxide + [thioredoxin]-dithiol = an alcohol + [thioredoxin]-disulfide + H2O. In terms of biological role, thiol-specific peroxidase that catalyzes the reduction of hydrogen peroxide and organic hydroperoxides to water and alcohols, respectively. Plays a role in cell protection against oxidative stress by detoxifying peroxides. May be involved in aging-associated changes in the responsiveness to oxidative stress. Involved in the maintenance of global thiol redox homeostasis. Functions in the central nervous system (CNS) and in motor neurons and is essential for normal motor function. This is Thioredoxin-dependent peroxide reductase, mitochondrial from Drosophila melanogaster (Fruit fly).